Consider the following 378-residue polypeptide: Protein RecA (378 aa).

79–86 (GPESSGKT) serves as a coordination point for ATP.

This sequence belongs to the RecA family.

The protein resides in the cytoplasm. Can catalyze the hydrolysis of ATP in the presence of single-stranded DNA, the ATP-dependent uptake of single-stranded DNA by duplex DNA, and the ATP-dependent hybridization of homologous single-stranded DNAs. It interacts with LexA causing its activation and leading to its autocatalytic cleavage. The protein is Protein RecA of Streptococcus pyogenes serotype M1.